We begin with the raw amino-acid sequence, 377 residues long: Caspase-4 (377 aa).

The required for LPS-binding stretch occupies residues 1 to 59; sequence MAEGNHRKKPLKVLESLGKDFLTGVLDNLVEQNVLNWKEEEKKKYYDAKTEDKVRVMAD. A propeptide spanning residues 1-80 is cleaved from the precursor; it reads MAEGNHRKKP…MLLQTFFNID (80 aa). The CARD domain maps to 1–91; sequence MAEGNHRKKP…ISPNKKAHPN (91 aa). Alanine 2 is modified (N-acetylalanine). Position 83 is a phosphoserine (serine 83). Residues 84 to 104 are disordered; it reads PNKKAHPNMEAGPPESGESTD. Residues histidine 210 and cysteine 258 contribute to the active site. Positions 271–289 are excised as a propeptide; that stretch reads SPASLEVASSQSSENLEED. Arginine 314 is subject to (Microbial infection) ADP-riboxanated arginine.

The protein belongs to the peptidase C14A family. Heterotetramer that consists of two anti-parallel arranged heterodimers, each one formed by a 20 kDa (Caspase-4 subunit p20) and a 10 kDa (Caspase-4 subunit p10) subunit. Upon direct LPS-binding, forms large homooligomers, resulting in its activation. These oligomers are often referred to as 'non-canonical inflammasomes'. In its precursor form, interacts with TMEM214; this interaction is required for association with the endoplasmic reticulum membrane. Interacts with CASP1. Interacts with NOD2. Interacts with SERPINB1; this interaction regulates CASP4 activity. In terms of assembly, heterotetramer that consists of two anti-parallel arranged heterodimers, each one formed by a 20 kDa (Caspase-4 subunit p20) and a 10 kDa (Caspase-4 subunit p10) subunit. As to quaternary structure, (Microbial infection) Interacts with NleF protein from pathogenic E.coli; this interaction leads to enzyme inhibition. (Microbial infection) Interacts with cathepsin CTSG; the interaction is promoted by the Td92 surface protein of the periodontal pathogen T.denticola and leads to CASP4 activation. In terms of processing, in response to activation signals, undergoes autoproteolytic cleavage and activation. (Microbial infection) ADP-riboxanation by S.flexneri OspC3 blocks CASP4 autoprocessing, preventing CASP4 activation and ability to recognize and cleave GSDMD, thereby thwarting the inflammasome/pyroptosis-mediated defense. As to expression, widely expressed, including in keratinocytes and colonic and small intestinal epithelial cells (at protein level). Not detected in brain.

The protein localises to the cytoplasm. It is found in the cytosol. It localises to the endoplasmic reticulum membrane. Its subcellular location is the mitochondrion. The protein resides in the inflammasome. The protein localises to the secreted. The enzyme catalyses Strict requirement for Asp at the P1 position. It has a preferred cleavage sequence of Tyr-Val-Ala-Asp-|- but also cleaves at Asp-Glu-Val-Asp-|-.. Its activity is regulated as follows. Activated by homooligomerization induced by direct binding to cytosolic LPS, in a TLR4-independent manner. In addition to LPS, CASP4/CASP11 may also be activated by oxidized phospholipid 1-palmitoyl-2-arachidonoyl- sn-glycero-3-phosphorylcholine, an oxidized phospholipid (oxPAPC), in dendritic cells, promoting adaptive immunity. The role of oxPAPC is however unclear and another report suggests that oxPAPC competes with LPS-binding and inhibits the non-canonical inflammasome in macrophages. Functionally, inflammatory caspase that acts as the effector of the non-canonical inflammasome by mediating lipopolysaccharide (LPS)-induced pyroptosis. Also indirectly activates the NLRP3 and NLRP6 inflammasomes. Acts as a thiol protease that cleaves a tetrapeptide after an Asp residue at position P1: catalyzes cleavage of CGAS, GSDMD and IL18. Effector of the non-canonical inflammasome independently of NLRP3 inflammasome and CASP1: the non-canonical inflammasome promotes pyroptosis through GSDMD cleavage without involving secretion of cytokine IL1B. In the non-canonical inflammasome, CASP4 is activated by direct binding to the lipid A moiety of LPS without the need of an upstream sensor. LPS-binding promotes CASP4 activation and CASP4-mediated cleavage of GSDMD and IL18, followed by IL18 secretion through the GSDMD pore, pyroptosis of infected cells and their extrusion into the gut lumen. Also indirectly promotes secretion of mature cytokines (IL1A and HMGB1) downstream of GSDMD-mediated pyroptosis via activation of the NLRP3 and NLRP6 inflammasomes. Involved in NLRP3-dependent CASP1 activation and IL1B secretion in response to non-canonical activators, such as UVB radiation or cholera enterotoxin. Involved in NLRP6 inflammasome-dependent activation in response to lipoteichoic acid (LTA), a cell-wall component of Gram-positive bacteria, which leads to CASP1 activation and IL1B secretion. Involved in LPS-induced IL6 secretion; this activity may not require caspase enzymatic activity. The non-canonical inflammasome is required for innate immunity to cytosolic, but not vacuolar, bacteria. Plays a crucial role in the restriction of S.typhimurium replication in colonic epithelial cells during infection. Activation of the non-canonical inflammasome in brain endothelial cells can lead to excessive pyroptosis, leading to blood-brain barrier breakdown. Pyroptosis limits bacterial replication, while cytokine secretion promotes the recruitment and activation of immune cells and triggers mucosal inflammation. May also act as an activator of adaptive immunity in dendritic cells, following activation by oxidized phospholipid 1-palmitoyl-2-arachidonoyl- sn-glycero-3-phosphorylcholine, an oxidized phospholipid (oxPAPC). Involved in cell death induced by endoplasmic reticulum stress and by treatment with cytotoxic APP peptides found in Alzheimer's patient brains. Cleavage of GSDMD is not strictly dependent on the consensus cleavage site but depends on an exosite interface on CASP4 that recognizes and binds the Gasdermin-D, C-terminal (GSDMD-CT) part. Catalyzes cleavage and maturation of IL18; IL18 processing also depends of the exosite interface on CASP4. In contrast, it does not directly process IL1B. During non-canonical inflammasome activation, cuts CGAS and may play a role in the regulation of antiviral innate immune activation. In terms of biological role, (Microbial infection) In response to the Td92 surface protein of the periodontal pathogen T.denticola, activated by cathepsin CTSG which leads to production and secretion of IL1A and pyroptosis of gingival fibroblasts. This Homo sapiens (Human) protein is Caspase-4.